A 403-amino-acid polypeptide reads, in one-letter code: D-mannonate dehydratase CC0532 (403 aa).

Residues Asn-38 and His-123 each coordinate substrate. Tyr-160 (proton donor/acceptor) is an active-site residue. Asp-211 serves as a coordination point for Mg(2+). His-213 acts as the Proton donor/acceptor in catalysis. Positions 237 and 263 each coordinate Mg(2+). Substrate is bound by residues Glu-263, Arg-284, His-313, Asp-317, and Glu-340.

This sequence belongs to the mandelate racemase/muconate lactonizing enzyme family. GalD subfamily. The cofactor is Mg(2+).

It catalyses the reaction D-mannonate = 2-dehydro-3-deoxy-D-gluconate + H2O. The protein operates within carbohydrate metabolism; pentose and glucuronate interconversion. Catalyzes the dehydration of D-mannonate. Has no detectable activity with a panel of 70 other acid sugars (in vitro). This chain is D-mannonate dehydratase CC0532, found in Caulobacter vibrioides (strain ATCC 19089 / CIP 103742 / CB 15) (Caulobacter crescentus).